Consider the following 118-residue polypeptide: Protein MGF 110-6L (118 aa).

The signal sequence occupies residues 1 to 18; it reads MLVTFLGILGLLASQVSS. Positions 115 to 118 match the Prevents secretion from ER motif; sequence KDEL.

This sequence belongs to the asfivirus MGF 110 family. Post-translationally, N-glycosylated.

It is found in the host endoplasmic reticulum lumen. Functionally, plays a role in virus cell tropism, and may be required for efficient virus replication in macrophages. The chain is Protein MGF 110-6L from Ornithodoros (relapsing fever ticks).